The chain runs to 256 residues: Probable transcriptional regulatory protein A1I_03240 (256 aa).

The interval 1–21 (MAGHSKFKNIQHRKGAQDKKR) is disordered.

Belongs to the TACO1 family.

The protein localises to the cytoplasm. In Rickettsia bellii (strain OSU 85-389), this protein is Probable transcriptional regulatory protein A1I_03240.